The following is a 240-amino-acid chain: Proteasome subunit beta type-1 (240 aa).

Position 1 is an N-acetylmethionine (methionine 1). Positions 1 to 27 are excised as a propeptide; that stretch reads MLSTAAYRDVERELGMGPHGSAGPVQL. Serine 57 carries O-linked (GlcNAc) serine glycosylation. Serine 61 and serine 67 each carry phosphoserine. Position 149 is a phosphotyrosine (tyrosine 149). At serine 161 the chain carries Phosphoserine. At lysine 203 the chain carries N6-acetyllysine. Serine 208 carries O-linked (GlcNAc) serine glycosylation.

The protein belongs to the peptidase T1B family. As to quaternary structure, the 26S proteasome consists of a 20S proteasome core and two 19S regulatory subunits. The 20S proteasome core is a barrel-shaped complex made of 28 subunits that are arranged in four stacked rings. The two outer rings are each formed by seven alpha subunits, and the two inner rings are formed by seven beta subunits. The proteolytic activity is exerted by three beta-subunits PSMB5, PSMB6 and PSMB7. Interacts with SERPINB2. Interacts with RFPL4A. In terms of tissue distribution, detected in liver (at protein level).

It localises to the cytoplasm. The protein resides in the nucleus. Its function is as follows. Non-catalytic component of the 20S core proteasome complex involved in the proteolytic degradation of most intracellular proteins. This complex plays numerous essential roles within the cell by associating with different regulatory particles. Associated with two 19S regulatory particles, forms the 26S proteasome and thus participates in the ATP-dependent degradation of ubiquitinated proteins. The 26S proteasome plays a key role in the maintenance of protein homeostasis by removing misfolded or damaged proteins that could impair cellular functions, and by removing proteins whose functions are no longer required. Associated with the PA200 or PA28, the 20S proteasome mediates ubiquitin-independent protein degradation. This type of proteolysis is required in several pathways including spermatogenesis (20S-PA200 complex) or generation of a subset of MHC class I-presented antigenic peptides (20S-PA28 complex). This is Proteasome subunit beta type-1 (Psmb1) from Mus musculus (Mouse).